A 307-amino-acid chain; its full sequence is Branched-chain-amino-acid aminotransferase (307 aa).

Lysine 160 carries the post-translational modification N6-(pyridoxal phosphate)lysine.

The protein belongs to the class-IV pyridoxal-phosphate-dependent aminotransferase family. It depends on pyridoxal 5'-phosphate as a cofactor.

The catalysed reaction is L-leucine + 2-oxoglutarate = 4-methyl-2-oxopentanoate + L-glutamate. The enzyme catalyses L-isoleucine + 2-oxoglutarate = (S)-3-methyl-2-oxopentanoate + L-glutamate. It catalyses the reaction L-valine + 2-oxoglutarate = 3-methyl-2-oxobutanoate + L-glutamate. Its pathway is amino-acid biosynthesis; L-isoleucine biosynthesis; L-isoleucine from 2-oxobutanoate: step 4/4. The protein operates within amino-acid biosynthesis; L-leucine biosynthesis; L-leucine from 3-methyl-2-oxobutanoate: step 4/4. It participates in amino-acid biosynthesis; L-valine biosynthesis; L-valine from pyruvate: step 4/4. Functionally, acts on leucine, isoleucine and valine. This Pseudomonas aeruginosa (strain ATCC 15692 / DSM 22644 / CIP 104116 / JCM 14847 / LMG 12228 / 1C / PRS 101 / PAO1) protein is Branched-chain-amino-acid aminotransferase (ilvE).